The primary structure comprises 423 residues: Probable efflux pump mfs2 (423 aa).

11 consecutive transmembrane segments (helical) span residues 21–41, 49–69, 79–99, 111–131, 138–158, 220–240, 256–278, 295–315, 319–339, 360–380, and 392–411; these read TMAL…IGPV, SIFH…GFAH, LLAG…LGDV, LYLL…GFIV, WMFW…LLFH, AILE…FSAL, YIVI…DYAY, IPLL…YGWA, HLIW…MQIF, AATQ…SNSL, and LLAF…LWRW.

Belongs to the major facilitator superfamily.

It is found in the membrane. Its function is as follows. Probable efflux pump; part of the gene cluster 27 that mediates the biosynthesis of asparasone A, a sclerotium-specific anthraquinone pigment important for sclerotial survival. In Aspergillus flavus (strain ATCC 200026 / FGSC A1120 / IAM 13836 / NRRL 3357 / JCM 12722 / SRRC 167), this protein is Probable efflux pump mfs2.